A 422-amino-acid chain; its full sequence is Serine--tRNA ligase (422 aa).

Position 229–231 (229–231 (TAE)) interacts with L-serine. 260–262 (RAE) contacts ATP. Residue glutamate 283 participates in L-serine binding. 347–350 (EISS) provides a ligand contact to ATP. Serine 383 is an L-serine binding site.

Belongs to the class-II aminoacyl-tRNA synthetase family. Type-1 seryl-tRNA synthetase subfamily. In terms of assembly, homodimer. The tRNA molecule binds across the dimer.

It is found in the cytoplasm. It carries out the reaction tRNA(Ser) + L-serine + ATP = L-seryl-tRNA(Ser) + AMP + diphosphate + H(+). The catalysed reaction is tRNA(Sec) + L-serine + ATP = L-seryl-tRNA(Sec) + AMP + diphosphate + H(+). The protein operates within aminoacyl-tRNA biosynthesis; selenocysteinyl-tRNA(Sec) biosynthesis; L-seryl-tRNA(Sec) from L-serine and tRNA(Sec): step 1/1. Catalyzes the attachment of serine to tRNA(Ser). Is also able to aminoacylate tRNA(Sec) with serine, to form the misacylated tRNA L-seryl-tRNA(Sec), which will be further converted into selenocysteinyl-tRNA(Sec). The sequence is that of Serine--tRNA ligase from Halothermothrix orenii (strain H 168 / OCM 544 / DSM 9562).